The following is a 151-amino-acid chain: HTH-type transcriptional regulator TcaR (151 aa).

In terms of domain architecture, HTH marR-type spans 1 to 142 (MVKHLQDHIQ…VRQVLEVINH (142 aa)). A DNA-binding region (H-T-H motif) is located at residues 54–77 (ISEITQRQGVNKAAVSRRIKKLID).

Functionally, involved in the antibiotic teicoplanin susceptibility. Inactivation of the tcaRAB operon leads to teicoplanin resistance. In terms of biological role, is a weak negative regulator of transcription of the icaABD operon. The polypeptide is HTH-type transcriptional regulator TcaR (tcaR) (Staphylococcus aureus (strain COL)).